The sequence spans 710 residues: Lactoperoxidase (710 aa).

The signal sequence occupies residues 1-22 (MKVLLRLPALLASLTLLQMAAS). Residues 23-98 (TRNATRTATI…WEQSLKRLRR (76 aa)) constitute a propeptide that is removed on maturation. N25, N104, and N131 each carry an N-linked (GlcNAc...) asparagine glycan. The cysteines at positions 130 and 143 are disulfide-linked. D223 contacts heme b. H224 acts as the Proton acceptor in catalysis. D225 provides a ligand contact to Ca(2+). A glycan (N-linked (GlcNAc...) asparagine) is linked at N238. 2 disulfide bridges follow: C244-C254 and C248-C272. T299, F301, D303, and S305 together coordinate Ca(2+). S313 bears the Phosphoserine mark. Residue N320 is glycosylated (N-linked (GlcNAc...) asparagine). A disulfide bridge connects residues C352 and C363. The heme b site is built by E373 and H466. Y480 is modified (3'-nitrotyrosine). Disulfide bonds link C571–C628 and C669–C694.

The protein belongs to the peroxidase family. XPO subfamily. It depends on Ca(2+) as a cofactor. Heme b is required as a cofactor. As to expression, expressed in the lacrimal gland with higher levels and 3-fold higher activity in adult females than males and secreted into tears (at protein level).

It is found in the secreted. It localises to the cytoplasm. The enzyme catalyses 2 a phenolic donor + H2O2 = 2 a phenolic radical donor + 2 H2O. The catalysed reaction is thiocyanate + H2O2 + H(+) = hypothiocyanous acid + H2O. It catalyses the reaction iodide + H2O2 = hypoiodite + H2O. Its function is as follows. Heme-containing oxidoreductase which catalyzes the conversion of thiocyanate (SCN(-)) into antimicrobial agent hypothiocyanous acid (OSCN(-)) in the presence of hydrogen peroxide (H2O2). Also involved in the conversion of iodide (I(-)) into hypoiodite (IO(-)) in the presence of H2O2. Responsible for the inactivation of a wide range of micro-organisms and hence, important component of defense mechanism. May be implicated in airway host defense against infection. May contribute to maintaining an appropriate H2O2 cellular level, therefore protecting cells from H2O2-caused injuries and inflammation. This Mesocricetus auratus (Golden hamster) protein is Lactoperoxidase (LPO).